The sequence spans 1227 residues: MAVKYTPDQARAIESRGQDLLVSASAGSGKTSVLVERVIREIMDDHLEVNQLLVITFTRAAASEMKQRIKQRLQDRLQEETDASQADFLRRQLAEIDTAIISTIDSFCLDVIRRFYFAIDIDPDFSILTDATQIELLKERALRDVENGYLQNEDQAKKDRFLALYDAFAGDSNANSARDLLLDLYQFAMARPNYRAWLQKLAAPYQLETSDVVDSALWQEKIKPYLEEEFSNLADKLTALMAEADFDHEKFAKYQPAFTAFATSLASYRESLATDDPFDRQRELLAACQFDGTLRTNKEIADFVEEAKEVKEAGKQLVFNVYTGFYASSNADQQALLAKGAEIASAAAEVELAFIDRFNELKRADRVLDFSDMEQLAYEILTQDSSNSDLARAYYQSRFKEIMVDEYQDTNALQDGLIQRLKKAGKNNLFMVGDVKQSIYGFRQAEPSLFIAKYDEYGQENSAGKQRIIFAENFRSSQPVTQAVNLIFDSLLTKDFGGIDYQKEGQLKFAAGYDPEAALPTETEVLYQEDSSATDDDGELNQGDLAMVISRIQKLIADQTPIFDPKTGQTRPVSYGDIAILTRSKTSNLDIKQEFDRYGVPLFVMDVQNYFQTFELTVIMSYLKIIDNPDQDIPLVAVLRSPIFNFSSSDLAEIRLVNKSVSFYAALRTYAKKDTDLAARCRDFLAQLQDLRDFSLSHRISELLWTIYERTSFLEIVTAMTNGQQRRLNLTALYERASAYESSGFKDLYQFINFIARMRKNQKDLAQPILSENAGNSVKLMTIHASKGLEFPVVFVLGLEHRYNYQQDITGSYVLDASGLGLSFAYPFDEAEYRADTLANVWLKIAKKQKLLEEEARLLYVALTRAKQKLILAANIKLPARTDLAGLEEKWAKEISAGRLTLLDKMKVAKPLDFLAPALARAKQVKRLGEKAVSDLATGQEGSLVFVHFDPKKDQAQLPDSEAVAASGADLTEDEAAVFKQAEKLYTFSQGGYPYLDASRTTAYQAVSEIKKVFGDPIEDELADSHISELQSANRYLQPIDTEPDFLFQNTVSSAELGTASHLVLQYYDYAKGDKNAIDSCIAGLVEKGRLSQTLASMLDREALSWFVKSDFAKDFYQQPDRLHREENFATILSPKTLFKDFSDFPGKILVHGTIDGYYEAENGIILFDYKTDHVNPRKQEEAIQKLKEKYQGQLRLYERALNESGRLPVLKKYLVLLSCREIVEVD.

Residues 3–477 (VKYTPDQARA…IIFAENFRSS (475 aa)) form the UvrD-like helicase ATP-binding domain. 24 to 31 (ASAGSGKT) provides a ligand contact to ATP. Residues 505 to 788 (GQLKFAAGYD…KLMTIHASKG (284 aa)) enclose the UvrD-like helicase C-terminal domain.

The protein belongs to the helicase family. AddA subfamily. As to quaternary structure, heterodimer of AddA and AddB/RexB. The cofactor is Mg(2+).

It carries out the reaction Couples ATP hydrolysis with the unwinding of duplex DNA by translocating in the 3'-5' direction.. It catalyses the reaction ATP + H2O = ADP + phosphate + H(+). Its function is as follows. The heterodimer acts as both an ATP-dependent DNA helicase and an ATP-dependent, dual-direction single-stranded exonuclease. Recognizes the chi site generating a DNA molecule suitable for the initiation of homologous recombination. The AddA nuclease domain is required for chi fragment generation; this subunit has the helicase and 3' -&gt; 5' nuclease activities. The chain is ATP-dependent helicase/nuclease subunit A from Lactobacillus delbrueckii subsp. bulgaricus (strain ATCC 11842 / DSM 20081 / BCRC 10696 / JCM 1002 / NBRC 13953 / NCIMB 11778 / NCTC 12712 / WDCM 00102 / Lb 14).